Reading from the N-terminus, the 307-residue chain is tRNA pseudouridine synthase B (307 aa).

The Nucleophile role is filled by aspartate 41.

Belongs to the pseudouridine synthase TruB family. Type 1 subfamily.

The enzyme catalyses uridine(55) in tRNA = pseudouridine(55) in tRNA. Functionally, responsible for synthesis of pseudouridine from uracil-55 in the psi GC loop of transfer RNAs. This Prochlorococcus marinus (strain MIT 9312) protein is tRNA pseudouridine synthase B.